Here is a 215-residue protein sequence, read N- to C-terminus: Peroxiredoxin 1 (215 aa).

The Thioredoxin domain occupies 2–157 (KLLGEKFPSM…ILRALKALQT (156 aa)). C44 serves as the catalytic Cysteine sulfenic acid (-SOH) intermediate. R120 contacts substrate.

It belongs to the peroxiredoxin family. Prx6 subfamily. Homodecamer. Pentamer of dimers that assemble into a ring structure.

The protein resides in the cytoplasm. It carries out the reaction a hydroperoxide + [thioredoxin]-dithiol = an alcohol + [thioredoxin]-disulfide + H2O. In terms of biological role, thiol-specific peroxidase that catalyzes the reduction of hydrogen peroxide and organic hydroperoxides to water and alcohols, respectively. Plays a role in cell protection against oxidative stress by detoxifying peroxides. The protein is Peroxiredoxin 1 of Caldanaerobacter subterraneus subsp. tengcongensis (strain DSM 15242 / JCM 11007 / NBRC 100824 / MB4) (Thermoanaerobacter tengcongensis).